Here is a 157-residue protein sequence, read N- to C-terminus: Ribosome-binding factor A (157 aa).

A disordered region spans residues 127–157 (QQQFGSEEASVEDEVLGDDVADDADETEGKD). Positions 135-157 (ASVEDEVLGDDVADDADETEGKD) are enriched in acidic residues.

It belongs to the RbfA family. As to quaternary structure, monomer. Binds 30S ribosomal subunits, but not 50S ribosomal subunits or 70S ribosomes.

It is found in the cytoplasm. One of several proteins that assist in the late maturation steps of the functional core of the 30S ribosomal subunit. Associates with free 30S ribosomal subunits (but not with 30S subunits that are part of 70S ribosomes or polysomes). Required for efficient processing of 16S rRNA. May interact with the 5'-terminal helix region of 16S rRNA. The sequence is that of Ribosome-binding factor A from Shewanella baltica (strain OS195).